Here is a 203-residue protein sequence, read N- to C-terminus: Small ribosomal subunit protein uS5 (203 aa).

The span at 1-25 shows a compositional bias: basic and acidic residues; it reads MPGRTRRDGGSESGGKDRRDRRDGG. The interval 1–36 is disordered; sequence MPGRTRRDGGSESGGKDRRDRRDGGRGGAAQEKTPQ. Residues 36–99 enclose the S5 DRBM domain; sequence QFERVVTINR…EEAKKNFFRV (64 aa).

This sequence belongs to the universal ribosomal protein uS5 family. As to quaternary structure, part of the 30S ribosomal subunit. Contacts proteins S4 and S8.

In terms of biological role, with S4 and S12 plays an important role in translational accuracy. Located at the back of the 30S subunit body where it stabilizes the conformation of the head with respect to the body. This chain is Small ribosomal subunit protein uS5, found in Saccharopolyspora erythraea (strain ATCC 11635 / DSM 40517 / JCM 4748 / NBRC 13426 / NCIMB 8594 / NRRL 2338).